The chain runs to 89 residues: Small ribosomal subunit protein uS15 (89 aa).

The protein belongs to the universal ribosomal protein uS15 family. Part of the 30S ribosomal subunit. Forms a bridge to the 50S subunit in the 70S ribosome, contacting the 23S rRNA.

In terms of biological role, one of the primary rRNA binding proteins, it binds directly to 16S rRNA where it helps nucleate assembly of the platform of the 30S subunit by binding and bridging several RNA helices of the 16S rRNA. Forms an intersubunit bridge (bridge B4) with the 23S rRNA of the 50S subunit in the ribosome. This is Small ribosomal subunit protein uS15 from Haemophilus influenzae (strain 86-028NP).